A 224-amino-acid chain; its full sequence is MAVTFTDLHTADGLKALEQHLSGKTYVSGNAISKDDIKVFAAVPSKPGAEFPNAARWYDTVAAALASRFPGKAVGVNLPGGGAASSAAAAAPAAKDADEDDDDLDLFGDETEEDKKAADERAASKASSKKKESGKSSVLLDVKPWDDETDMKKLEEAVRSVQMEGLTWGASKLVPVGYGIKKLQIMLTIVDDLVSVDSLIEEHLTEEPINEFVQSCDIVAFNKI.

This sequence belongs to the EF-1-beta/EF-1-delta family. EF-1 is composed of 4 subunits: alpha, beta (1B-alpha=beta'), delta (1B-beta), and gamma (1B-gamma).

EF-1-beta and EF-1-beta' stimulate the exchange of GDP bound to EF-1-alpha to GTP. In Oryza sativa subsp. japonica (Rice), this protein is Elongation factor 1-beta.